The chain runs to 667 residues: E3 ubiquitin-protein ligase RNF6 (667 aa).

Disordered regions lie at residues 1 to 25 (MDPSRSRSGGSGEESSFQENERRWQ), 75 to 100 (KEQLASQPGSDSAASDGDSESLRAHS), 116 to 216 (GNVT…QGSF), 295 to 355 (FSSR…TPLS), 396 to 419 (ETRDRDSIANRTRSRAGLAESTVE), 507 to 532 (GDAADDSGQHGRASSQASQAQDGAEM), and 537 to 556 (EPAPPQARPSGSRSRRQLGR). The span at 79 to 90 (ASQPGSDSAASD) shows a compositional bias: low complexity. Residues 116-139 (GNVTRSGQNGNQSWRAVSRTNPNS) are compositionally biased toward polar residues. Residues 150–163 (INPDNRGSEMHGED) are compositionally biased toward basic and acidic residues. Residues 191 to 200 (SQTSMSSSGP) show a composition bias toward low complexity. Residues 296–327 (SSRSRSPIQRQNGTVHHNSQRQGRPVQQTGRN) show a composition bias toward polar residues. Over residues 516–530 (HGRASSQASQAQDGA) the composition is skewed to low complexity. Serine 559 carries the post-translational modification Phosphoserine. Residues 614–655 (CSVCISDYVAGNKLRQLPCLHEFHIHCIDRWLSENCTCPVCR) form an RING-type; atypical zinc finger.

The protein belongs to the RNF12 family. Widely expressed with higher expression in the testis in both germ cells and Sertoli cells.

The protein resides in the nucleus. It localises to the cytoplasm. Its subcellular location is the cell projection. The protein localises to the axon. It is found in the PML body. It carries out the reaction S-ubiquitinyl-[E2 ubiquitin-conjugating enzyme]-L-cysteine + [acceptor protein]-L-lysine = [E2 ubiquitin-conjugating enzyme]-L-cysteine + N(6)-ubiquitinyl-[acceptor protein]-L-lysine.. Its pathway is protein modification; protein ubiquitination. In terms of biological role, E3 ubiquitin-protein ligase mediating 'Lys-48'-linked polyubiquitination of LIMK1 and its subsequent targeting to the proteasome for degradation. Negatively regulates axonal outgrowth through regulation of the LIMK1 turnover. Mediates 'Lys-6' and 'Lys-27'-linked polyubiquitination of AR/androgen receptor thereby modulating its transcriptional activity. May also bind DNA and function as a transcriptional regulator. Mediates polyubiquitination of QKI in macrophages, leading to its degradation. This chain is E3 ubiquitin-protein ligase RNF6, found in Mus musculus (Mouse).